The primary structure comprises 360 residues: Peptide chain release factor 1 (360 aa).

Q234 bears the N5-methylglutamine mark.

This sequence belongs to the prokaryotic/mitochondrial release factor family. Methylated by PrmC. Methylation increases the termination efficiency of RF1.

It is found in the cytoplasm. Functionally, peptide chain release factor 1 directs the termination of translation in response to the peptide chain termination codons UAG and UAA. The sequence is that of Peptide chain release factor 1 from Clostridium perfringens (strain 13 / Type A).